Reading from the N-terminus, the 365-residue chain is S-adenosylmethionine:tRNA ribosyltransferase-isomerase (365 aa).

Belongs to the QueA family. In terms of assembly, monomer.

The protein localises to the cytoplasm. The catalysed reaction is 7-aminomethyl-7-carbaguanosine(34) in tRNA + S-adenosyl-L-methionine = epoxyqueuosine(34) in tRNA + adenine + L-methionine + 2 H(+). It functions in the pathway tRNA modification; tRNA-queuosine biosynthesis. Its function is as follows. Transfers and isomerizes the ribose moiety from AdoMet to the 7-aminomethyl group of 7-deazaguanine (preQ1-tRNA) to give epoxyqueuosine (oQ-tRNA). This chain is S-adenosylmethionine:tRNA ribosyltransferase-isomerase, found in Helicobacter hepaticus (strain ATCC 51449 / 3B1).